We begin with the raw amino-acid sequence, 158 residues long: Ribosome maturation factor RimP (158 aa).

This sequence belongs to the RimP family.

Its subcellular location is the cytoplasm. Functionally, required for maturation of 30S ribosomal subunits. The chain is Ribosome maturation factor RimP from Pseudomonas savastanoi pv. phaseolicola (strain 1448A / Race 6) (Pseudomonas syringae pv. phaseolicola (strain 1448A / Race 6)).